The sequence spans 521 residues: MLAKGLPPRSVLVKGCQTFLSAPREGLGRLRVPTGEGAGISTRSPRPFNEIPSPGDNGWLNLYHFWRETGTHKVHLHHVQNFQKYGPIYREKLGNVESVYVIDPEDVALLFKSEGPNPERFLIPPWVAYHQYYQRPIGVLLKKSAAWKKDRVALNQEVMAPEATKNFLPLLDAVSRDFVSVLHRRIKKAGSGNYSGDISDDLFRFAFESITNVIFGERQGMLEEVVNPEAQRFIDAIYQMFHTSVPMLNLPPDLFRLFRTKTWKDHVAAWDVIFSKADIYTQNFYWELRQKGSVHHDYRGILYRLLGDSKMSFEDIKANVTEMLAGGVDTTSMTLQWHLYEMARNLKVQDMLRAEVLAARHQAQGDMATMLQLVPLLKASIKETLRLHPISVTLQRYLVNDLVLRDYMIPAKTLVQVAIYALGREPTFFFDPENFDPTRWLSKDKNITYFRNLGFGWGVRQCLGRRIAELEMTIFLINMLENFRVEIQHLSDVGTTFNLILMPEKPISFTFWPFNQEATQQ.

Residues 1–39 (MLAKGLPPRSVLVKGCQTFLSAPREGLGRLRVPTGEGAG) constitute a mitochondrion transit peptide. A heme-binding site is contributed by Cys462.

The protein belongs to the cytochrome P450 family. As to quaternary structure, interacts with FDX1/adrenodoxin. It depends on heme as a cofactor.

Its subcellular location is the mitochondrion inner membrane. The catalysed reaction is 6 reduced [adrenodoxin] + cholesterol + 3 O2 + 6 H(+) = 4-methylpentanal + pregnenolone + 6 oxidized [adrenodoxin] + 4 H2O. It catalyses the reaction 2 reduced [adrenodoxin] + cholesterol + O2 + 2 H(+) = (22R)-hydroxycholesterol + 2 oxidized [adrenodoxin] + H2O. The enzyme catalyses (22R)-hydroxycholesterol + 2 reduced [adrenodoxin] + O2 + 2 H(+) = (20R,22R)-20,22-dihydroxycholesterol + 2 oxidized [adrenodoxin] + H2O. It carries out the reaction (20R,22R)-20,22-dihydroxycholesterol + 2 reduced [adrenodoxin] + O2 + 2 H(+) = 4-methylpentanal + pregnenolone + 2 oxidized [adrenodoxin] + 2 H2O. It functions in the pathway lipid metabolism; C21-steroid hormone metabolism. It participates in steroid metabolism; cholesterol metabolism. Its function is as follows. A cytochrome P450 monooxygenase that catalyzes the side-chain hydroxylation and cleavage of cholesterol to pregnenolone, the precursor of most steroid hormones. Catalyzes three sequential oxidation reactions of cholesterol, namely the hydroxylation at C22 followed with the hydroxylation at C20 to yield 20R,22R-hydroxycholesterol that is further cleaved between C20 and C22 to yield the C21-steroid pregnenolone and 4-methylpentanal. Mechanistically, uses molecular oxygen inserting one oxygen atom into a substrate and reducing the second into a water molecule. Two electrons are provided by NADPH via a two-protein mitochondrial transfer system comprising flavoprotein FDXR (adrenodoxin/ferredoxin reductase) and nonheme iron-sulfur protein FDX1 or FDX2 (adrenodoxin/ferredoxin). The chain is Cholesterol side-chain cleavage enzyme, mitochondrial from Homo sapiens (Human).